The sequence spans 103 residues: Large ribosomal subunit protein bL21 (103 aa).

Belongs to the bacterial ribosomal protein bL21 family. In terms of assembly, part of the 50S ribosomal subunit. Contacts protein L20.

This protein binds to 23S rRNA in the presence of protein L20. The polypeptide is Large ribosomal subunit protein bL21 (Verminephrobacter eiseniae (strain EF01-2)).